A 284-amino-acid chain; its full sequence is 2-dehydro-3-deoxyphosphooctonate aldolase (284 aa).

It belongs to the KdsA family.

The protein resides in the cytoplasm. It carries out the reaction D-arabinose 5-phosphate + phosphoenolpyruvate + H2O = 3-deoxy-alpha-D-manno-2-octulosonate-8-phosphate + phosphate. Its pathway is carbohydrate biosynthesis; 3-deoxy-D-manno-octulosonate biosynthesis; 3-deoxy-D-manno-octulosonate from D-ribulose 5-phosphate: step 2/3. It participates in bacterial outer membrane biogenesis; lipopolysaccharide biosynthesis. This Escherichia fergusonii (strain ATCC 35469 / DSM 13698 / CCUG 18766 / IAM 14443 / JCM 21226 / LMG 7866 / NBRC 102419 / NCTC 12128 / CDC 0568-73) protein is 2-dehydro-3-deoxyphosphooctonate aldolase.